Here is a 298-residue protein sequence, read N- to C-terminus: ADP-ribosyl cyclase/cyclic ADP-ribose hydrolase 1 (298 aa).

Over 1–21 (MPDYEFSPASGDRPRSWISKQ) the chain is Cytoplasmic. The helical; Signal-anchor for type II membrane protein transmembrane segment at 22-42 (VLIVLGVCLPVILALAIWVGV) threads the bilayer. Over 43–298 (LTWRQSSMGA…PEHPSCSVLM (256 aa)) the chain is Extracellular. 3 disulfides stabilise this stretch: Cys64–Cys80, Cys97–Cys178, and Cys158–Cys171. Residue Asn98 is glycosylated (N-linked (GlcNAc...) asparagine). Cys117 is an active-site residue. Residue Asn118 is glycosylated (N-linked (GlcNAc...) asparagine). Asn177 carries an N-linked (GlcNAc...) asparagine glycan. The active site involves Cys199. 2 N-linked (GlcNAc...) asparagine glycosylation sites follow: Asn207 and Asn268. Disulfide bonds link Cys252–Cys273 and Cys285–Cys294.

The protein belongs to the ADP-ribosyl cyclase family. In terms of assembly, homodimer. As to expression, osteoclasts.

The protein localises to the cell membrane. The protein resides in the microsome membrane. It localises to the endoplasmic reticulum membrane. It carries out the reaction NAD(+) = cyclic ADP-beta-D-ribose + nicotinamide + H(+). It catalyses the reaction 2'-phospho-cyclic ADP-ribose + nicotinate = nicotinate-adenine dinucleotide phosphate. The enzyme catalyses NAD(+) + H2O = ADP-D-ribose + nicotinamide + H(+). The catalysed reaction is nicotinate + NADP(+) = nicotinate-adenine dinucleotide phosphate + nicotinamide. In terms of biological role, synthesizes cyclic ADP-ribose (cADPR), a second messenger for glucose-induced insulin secretion. Synthesizes the Ca(2+) mobilizer nicotinate-adenine dinucleotide phosphate, NAADP(+), from 2'-phospho-cADPR and nicotinic acid, as well as from NADP(+) and nicotinic acid. Also has cADPR hydrolase activity. This is ADP-ribosyl cyclase/cyclic ADP-ribose hydrolase 1 (CD38) from Oryctolagus cuniculus (Rabbit).